The sequence spans 353 residues: MEIDLGANAFGIDFHPSTNLVAAGLIDGHLHLYRYDSDSSLVRERKVRAHKESCRAVRFIDDGQRIVTASADCSILATDVETGAQVAHLENAHEDAVNTLINVTETTIASGDDKGCVKIWDTRQRSCSHEFNAHEDYISGMTFASDSMKLVVTSGDGTLSVCNLRTSKVQSQSEFSEDELLSVVIMKNGRKVICGTQNGTLLLYSWGFFKDCSDRFVDLAPNSVDALLKLDEDRLITGCDNGIISLVGILPNRIIQPIGSHDYPIEDLALSHDKKFLGSTAHDSMLKLWNLEEILEGSNVNSGNASGAAEDSDSDNDGMDLDNDPSKSSKGSKRKTKSKANTLNATNNFFADL.

7 WD repeats span residues 4–43 (DLGA…SLVR), 49–88 (AHKE…QVAH), 92–130 (AHED…CSHE), 133–172 (AHED…VQSQ), 175–214 (FSED…DCSD), 218–257 (DLAP…IIQP), and 260–299 (SHDY…EGSN). A disordered region spans residues 300 to 353 (VNSGNASGAAEDSDSDNDGMDLDNDPSKSSKGSKRKTKSKANTLNATNNFFADL). Residues 310–323 (EDSDSDNDGMDLDN) show a composition bias toward acidic residues. The segment covering 339-353 (KANTLNATNNFFADL) has biased composition (low complexity).

Belongs to the WD repeat WDR55 family. Interacts with DDB1A. As to expression, highly expressed in roots. Expressed in cotyledons, leaves, buds and flowers.

The protein localises to the nucleus. The protein resides in the cytoplasm. Functionally, required for male and female gametogenesis, seed development, and embryo and endosperm development at early stages. Involved in the establishment of bilateral symmetry in the transition from the globular to the heart embryo stage. May act in the frame of a CRL4 complex. Required for proper vegetative growth and organization of the adult plant body. May play a role in hormonal control of plant development. The protein is WD repeat-containing protein 55 of Arabidopsis thaliana (Mouse-ear cress).